Here is a 76-residue protein sequence, read N- to C-terminus: MKAGIHPAYNEISVICACGHSLKTRSTHKGDMRVEICSSCHPFFTGKQKLMDTAGRIDRFEKKYKASRVGKAAPTT.

4 residues coordinate Zn(2+): C16, C18, C37, and C40.

This sequence belongs to the bacterial ribosomal protein bL31 family. Type A subfamily. Part of the 50S ribosomal subunit. It depends on Zn(2+) as a cofactor.

Its function is as follows. Binds the 23S rRNA. The sequence is that of Large ribosomal subunit protein bL31 from Solibacter usitatus (strain Ellin6076).